We begin with the raw amino-acid sequence, 284 residues long: Urease accessory protein UreD (284 aa).

Belongs to the UreD family. In terms of assembly, ureD, UreF and UreG form a complex that acts as a GTP-hydrolysis-dependent molecular chaperone, activating the urease apoprotein by helping to assemble the nickel containing metallocenter of UreC. The UreE protein probably delivers the nickel.

Its subcellular location is the cytoplasm. Functionally, required for maturation of urease via the functional incorporation of the urease nickel metallocenter. In Bordetella bronchiseptica (strain ATCC BAA-588 / NCTC 13252 / RB50) (Alcaligenes bronchisepticus), this protein is Urease accessory protein UreD.